A 274-amino-acid polypeptide reads, in one-letter code: Glutamate racemase (274 aa).

Substrate contacts are provided by residues 9–10 (DS) and 41–42 (YG). Catalysis depends on Cys73, which acts as the Proton donor/acceptor. 74–75 (NT) provides a ligand contact to substrate. Cys183 functions as the Proton donor/acceptor in the catalytic mechanism. Residue 184 to 185 (TH) coordinates substrate.

This sequence belongs to the aspartate/glutamate racemases family.

It carries out the reaction L-glutamate = D-glutamate. It participates in cell wall biogenesis; peptidoglycan biosynthesis. In terms of biological role, provides the (R)-glutamate required for cell wall biosynthesis. The protein is Glutamate racemase of Shewanella baltica (strain OS185).